The following is a 465-amino-acid chain: Protein Loquacious (465 aa).

The necessary for enhancing pre-miRNA processing by Dcr-1 stretch occupies residues 1-337 (MDQENFHGSS…DSICGELEGE (337 aa)). Residues 1–379 (MDQENFHGSS…TLKNATGKKL (379 aa)) are not required for interaction with Dcr-1. Positions 1–392 (MDQENFHGSS…QKTCLKNNKI (392 aa)) are important for homodimerization and interaction with Dcr-1. Positions 129-211 (NGLAMKTPVS…DKLIGAQLPE (83 aa)) are sufficient for binding RNA. The interval 129-322 (NGLAMKTPVS…WMRLQETPID (194 aa)) is necessary for promoting preferential binding of Dcr-2 to the less stably base paired ends of siRNAs. One can recognise a DRBM 1 domain in the interval 135–206 (TPVSILQELL…ARALIDKLIG (72 aa)). Residues 209 to 249 (LPESPSSSAGPSVTGLTVAGSGGDGNANATGGGDASDKTVG) are enables simultaneous binding of both DRBM 1 and 2 domains to dsRNA. A disordered region spans residues 210–246 (PESPSSSAGPSVTGLTVAGSGGDGNANATGGGDASDK). Over residues 211 to 223 (ESPSSSAGPSVTG) the composition is skewed to polar residues. Residues 220 to 465 (SVTGLTVAGS…LEYLKIMTKK (246 aa)) are necessary and sufficient for enhancing processing of pre-miRNAs by Dcr-1. Over residues 228-242 (GSGGDGNANATGGGD) the composition is skewed to gly residues. The tract at residues 245 to 322 (DKTVGNPIGW…WMRLQETPID (78 aa)) is sufficient for binding RNA. The DRBM 2 domain occupies 250-318 (NPIGWLQEMC…AHRMWMRLQE (69 aa)). The interval 308 to 309 (AA) is necessary for binding pre-miRNA. Positions 338 to 359 (PRSSENYYGELKDISVPTLTTQ) are required for binding to Dcr-2 and to fully enhance Dcr-2 mediated cleavage of 3' overhanging termini (3'ovr) and blunt termini (BLT) dsRNAs. However, this region is dispensable for binding the dsRNA substrates. The interval 340–465 (SSENYYGELK…LEYLKIMTKK (126 aa)) is necessary for interaction with Dcr-1. The segment at 392–463 (IDYIKLLGEI…NALEYLKIMT (72 aa)) is sufficent for binding to Dcr-1. One can recognise a DRBM 3 domain in the interval 393-461 (DYIKLLGEIA…AQNALEYLKI (69 aa)).

In terms of assembly, homodimer. As to quaternary structure, interacts with dicer enzyme Dcr-1. Component of the miRNA-directed RNA-induced loading complex (miRLC), composed of at least Dcr-1, AGO1 and loqs isoform PB (loqs-PB), which processes pre-miRNAs and loads the resulting miRNAs into the Argonaute 1 (AGO1)-containing RNA-induced silencing complex (miRISC) to target the selective destruction of homologous RNAs. Interacts (via DRBM 3 domain) with dicer enzyme Dcr-1 (via helicase domain). Different regions of the Dcr-1-loqs-PB heterodimer collaborate to recognize, bind and position the pre-miRNA for Dcr-1 mediated cleavage. In the absence of miRNA substrates, the heterodimer favors a closed, catalytically incompetent, conformation, whereas binding of authentic pre-miRNA substrates stabilizes the relatively rare open, catalytically competent, conformation of the heterodimer. During substrate recognition, the Dcr-1 PAZ domain and pre-miRNA interact with the DRBM 1 domain of loqs-PB, which likely contributes to substrate recognition and stabilization. At the miRNA binding stage, the Dcr-1 DRBM domain and the loqs-PB DRBM domains then bind the pre-miRNA in tandem to form a tight 'belt' around the pre-miRNA stem, the pre-miRNA loop is docked in the loop-binding region formed by DUF283, DRBM and part of the helicase domain of Dcr-1, and the loqs-PB DRBM 1 and the wing domain of Dcr-1 act together to bind the 5' and 3' pre-miRNA termini within the PAZ and platform domains of Dcr-1. These interactions between the proteins and their pre-miRNA substrate stabilize a distorted form of the pre-miRNA and position the scissile phosphodiester bonds of the pre-miRNA at the RNase III catalytic cleavage sites of Dcr-1. Following Dcr-1 mediated cleavage, the miRNA duplex remains bound to loqs-PB DRBM 1, which dissociates from the Dcr-1 RNase III 1 domain but remains in contact with the PAZ and wing domains suggesting that the heterodimer presents the mature miRNA to AGO2 for loading into the RNA-induced silencing complex (miRISC). In terms of assembly, able to interact with dicer enzyme Dcr-1. However, the relevance of such an interaction is unclear in vivo and another report found that it did not interact with Dcr-1. As to quaternary structure, monomer. Interacts (via C-terminus) with dicer enzyme Dcr-2 (via N-terminus); interaction is required for RNAi activity in producing siRNAs from a subset of endo- and exo-dsRNAs, and in the alternative siRLC, the interaction enhances the binding preference of the protein for the thermodynamically more stable ends of endogenous siRNAs. Interaction with Dcr-2 is RNA independent, however the isoform must bind both dsRNA and Dcr-2 to enhance Dcr-2 cleavage activity. Does not interact with Dcr-1. As to expression, strong expression in males and females. Expression in ovaries is relatively weak. In terms of tissue distribution, strong expression in females and relatively weak expression in males. Strong expression in ovaries.

It is found in the cytoplasm. Its subcellular location is the cytosol. Functionally, double-stranded RNA-binding protein which can function in gene silencing by acting with Dcr-1 to enhance its ATP-independent processing of a specific subset of precursor micro-RNAs (pre-miRNAs) to mature miRNAs. Some reports found it was able to enhance the efficiency of pre-miRNA processing by Dcr-1, and can shift the cleavage site of Dcr-1 altering the length of the mature miRNAs produced by Dcr-1 alone. However, in contrast to isoform PB, it is not necessary or sufficient for enhancing miRNA biogenesis, and is not required for development or female germline stem cell (GSC) maintenance. Another report also found that it decreases binding of Dcr-1 to the miRNA substrate let-7. In terms of biological role, double-stranded RNA-binding protein which functions in gene silencing by acting with Dcr-1 to enhance its ATP-independent processing of a specific subset of precursor micro-RNAs (pre-miRNAs) to mature miRNAs. Function is essential for development and female germline stem cell (GSC) maintenance. Functions in miRNA-mediated gene silencing by enhancing the binding affinity and specific pre-miRNA processing activity of Dcr-1, and as part of the loqs-PB-Dcr-1 complex, is involved in substrate discrimination, correctly positioning the pre-miRNA in the Dcr-1 catalytic center for cleavage, and miRNA loading into the Argonaute 1 (Ago1)-containing RNA-induced silencing complex (miRISC). Increases the binding affinity of Dcr-1 to pre-miRNAs, thereby increasing dicing efficiency and broadening the range of substrates that can be processed by the dicer. It may also confer the substrate specificity of Dcr-1 towards pre-miRNAs, as in its absence Dcr-1 displays siRNA-generating activity towards long dsRNA substrates. It can also shift the cleavage site of Dcr-1 for a small number of pre-miRNAs, changing the length of the mature miRNAs produced by Dcr-1 alone. Increases the range of pre-miRNAs that can be processed by Dcr-1, by enhancing the dicing of suboptimal hairpin substrates including ones with mismatches at the dicing site. This function may also promote the generation of novel miRNA genes as it appears to have an important role in processing evolutionarily young miRNA genes, suggesting that it may also enhance dicing of substrates that have not acquired hairpin features required for efficient miRNA processing. As newly emerged miRNAs can have deleterious or beneficial effects on fitness, this function is likely part of a regulatory system that prevents excessive emergence of active miRNA genes and thus keeps them within an optimal range. Also forms a RISC loading complex (miRLC) with Dcr-1 to mediate Ago1-loading of mature miRNAs into the RNA-induced silencing complex (miRISC). In female ovaries, required for Dcr-1 to generate the twenty-three nucleotide isomiR variant of miR-307a which is able to repress its targets Gk2 and tara. Its function is as follows. Double-stranded RNA-binding protein which has an essential role in gene silencing (RNAi) by acting with Dcr-2 to enhance its ATP-dependent processing of a subset of endogenous (endo) and exogenous (exo) dsRNAs into short interfering RNAs (siRNAs). Functions in RNAi by increasing the initial binding affinity of Dcr-2 to certain dsRNA substrates, and in the absence of r2d2, may also function in siRNA loading into the Argonaute 2 (AGO2)-containing RNA-induced silencing complex (siRISC) and guide strand selection for target silencing by the siRISC. Promotes Dcr-2 cleavage of a subset of dsRNAs, including endo-dsRNAs derived from convergent transcription, inverted repeats and transposons. Also enables Dcr-2 to produce hairpin-derived endo-siRNAs in the presence of cellular inhibitory inorganic phosphate, likely by increasing the binding affinity of the enzyme to the hairpin dsRNAs allowing the dsRNA to displace phosphate bound to Dcr-2. According to many reports, the cleavage reaction mode of Dcr-2 changes according to the termini of the dsRNA substrate, with the enzyme displaying a preference for processing blunt termini (BLT), likely non-self dsRNAs, over dsRNAs with 2 nucleotides 3' overhanging (3'ovr) termini, which are typically the structure of endo-dsRNAs. According to many reports, interaction with Loqs-PD modifies the molecular recognition mechanisms of Dcr-2 towards sub-optimal 3'ovr dsRNA substrates and thus enables the dicer to cleave endo-dsRNA templates with diverse termini. However, according to another report, the mode of cleavage reaction is not affected by the presence or absence of loqs-PD. In the absence of r2d2, may also form an alternative RISC loading complex (siRLC) with Dcr-2 to mediate AGO2-loading of endo- and exo-siRNAs into the RNA-induced silencing complex (siRISC). Many reports suggest that loqs-PD and r2d2 function independently with dcr-2 in distinct siRNA pathways, and may even compete for binding to the enzyme. Loaded siRNAs serve as a guide to direct the siRISC to complementary RNAs to degrade them or prevent their translation. The siRLC plays an important role in the ATP-dependent asymmetry sensing of the duplex, and is therefore also responsible for the selection of the strand that ultimately acts as the guide siRNA for the siRISC. Thermodynamically asymmetric endo-siRNAs can be pre-oriented in the siRLC by the Loqs-PD and DCr-2 complex, which preferentially binds to the most thermodynamically stable strand prior to loading into the siRISC. Appears to be involved in promoting double-strand breaks (DSBs) following exposure to a low-dose/dose-rate (LDR) of ionizing radiation. The sequence is that of Protein Loquacious from Drosophila melanogaster (Fruit fly).